The following is a 373-amino-acid chain: MKILADQNMPLVEQYFADIGEVERFDGRQLTADQLIDVDVLLTRSVTQVNNELLAHANKLSFVGTATIGVDHIDTQLLNDKNIAFSSAPGCNAIAVAEYVISSLYALSQENARPLNNQTIGIVGVGSIGSCLAQKLQALNLTVLLCDPIKHAQGLLNEHVALDQLLAQSDIVTFHVPLIKSGEHKTLHMMDKARLKALKPGLTLINASRGDVIDNQALLEVMQAGADLDLVLDVWENEPTILIELLEHVRYASVHIAGHTLEGKARGTQILYQKFCELKGIEATKSLDEFLPVPAITQATLGQSFNEADIARLVHLIYDVRRDDGILLRDLANNGFDSLRKNYPVRREFSTLTIQGDSSQLAALAQLGFTVAN.

Substrate is bound by residues Ser45 and Thr67. NAD(+) contacts are provided by residues Asp147, 207–209, and Asp233; that span reads ASR. Arg209 is a catalytic residue. Residue Glu238 is part of the active site. His255 functions as the Proton donor in the catalytic mechanism. Gly258 is an NAD(+) binding site.

It belongs to the D-isomer specific 2-hydroxyacid dehydrogenase family. PdxB subfamily. Homodimer.

The protein localises to the cytoplasm. It catalyses the reaction 4-phospho-D-erythronate + NAD(+) = (R)-3-hydroxy-2-oxo-4-phosphooxybutanoate + NADH + H(+). The protein operates within cofactor biosynthesis; pyridoxine 5'-phosphate biosynthesis; pyridoxine 5'-phosphate from D-erythrose 4-phosphate: step 2/5. Its function is as follows. Catalyzes the oxidation of erythronate-4-phosphate to 3-hydroxy-2-oxo-4-phosphonooxybutanoate. The sequence is that of Erythronate-4-phosphate dehydrogenase from Pseudoalteromonas translucida (strain TAC 125).